The primary structure comprises 377 residues: Phosphoserine aminotransferase (377 aa).

R43 contributes to the L-glutamate binding site. Pyridoxal 5'-phosphate is bound by residues W105, T164, D189, and Q212. At K213 the chain carries N6-(pyridoxal phosphate)lysine. Position 254-255 (254-255) interacts with pyridoxal 5'-phosphate; sequence NT.

This sequence belongs to the class-V pyridoxal-phosphate-dependent aminotransferase family. SerC subfamily. As to quaternary structure, homodimer. Pyridoxal 5'-phosphate is required as a cofactor.

It localises to the cytoplasm. It catalyses the reaction O-phospho-L-serine + 2-oxoglutarate = 3-phosphooxypyruvate + L-glutamate. It carries out the reaction 4-(phosphooxy)-L-threonine + 2-oxoglutarate = (R)-3-hydroxy-2-oxo-4-phosphooxybutanoate + L-glutamate. It functions in the pathway amino-acid biosynthesis; L-serine biosynthesis; L-serine from 3-phospho-D-glycerate: step 2/3. Its pathway is cofactor biosynthesis; pyridoxine 5'-phosphate biosynthesis; pyridoxine 5'-phosphate from D-erythrose 4-phosphate: step 3/5. In terms of biological role, catalyzes the reversible conversion of 3-phosphohydroxypyruvate to phosphoserine and of 3-hydroxy-2-oxo-4-phosphonooxybutanoate to phosphohydroxythreonine. The protein is Phosphoserine aminotransferase of Bordetella bronchiseptica (strain ATCC BAA-588 / NCTC 13252 / RB50) (Alcaligenes bronchisepticus).